The sequence spans 284 residues: Nucleotide-binding protein Shewmr4_0670 (284 aa).

ATP is bound at residue 8–15; sequence GRSGSGKS. 56 to 59 lines the GTP pocket; that stretch reads DVRN.

Belongs to the RapZ-like family.

Functionally, displays ATPase and GTPase activities. In Shewanella sp. (strain MR-4), this protein is Nucleotide-binding protein Shewmr4_0670.